The chain runs to 506 residues: Histidine ammonia-lyase (506 aa).

Positions 143-145 (ASG) form a cross-link, 5-imidazolinone (Ala-Gly). S144 carries the post-translational modification 2,3-didehydroalanine (Ser).

The protein belongs to the PAL/histidase family. Contains an active site 4-methylidene-imidazol-5-one (MIO), which is formed autocatalytically by cyclization and dehydration of residues Ala-Ser-Gly.

The protein resides in the cytoplasm. The enzyme catalyses L-histidine = trans-urocanate + NH4(+). The protein operates within amino-acid degradation; L-histidine degradation into L-glutamate; N-formimidoyl-L-glutamate from L-histidine: step 1/3. The protein is Histidine ammonia-lyase of Salmonella agona (strain SL483).